The sequence spans 129 residues: Defensin-like protein 182 (129 aa).

Positions M1 to G26 are cleaved as a signal peptide. Disulfide bonds link C29-C70, C36-C55, C39-C64, C43-C66, C83-C129, C94-C114, C99-C123, and C103-C125.

It belongs to the DEFL family.

Its subcellular location is the secreted. Confers broad-spectrum resistance to pathogens. The sequence is that of Defensin-like protein 182 (PDF3.2) from Arabidopsis thaliana (Mouse-ear cress).